Consider the following 375-residue polypeptide: Probable trehalose-phosphate phosphatase 7 (375 aa).

The protein belongs to the trehalose phosphatase family. Requires a divalent metal cation as cofactor.

The enzyme catalyses alpha,alpha-trehalose 6-phosphate + H2O = alpha,alpha-trehalose + phosphate. It functions in the pathway glycan biosynthesis; trehalose biosynthesis. Functionally, removes the phosphate from trehalose 6-phosphate to produce free trehalose. Trehalose accumulation in plant may improve abiotic stress tolerance. This chain is Probable trehalose-phosphate phosphatase 7 (TPP7), found in Oryza sativa subsp. japonica (Rice).